Consider the following 911-residue polypeptide: Androgen receptor (911 aa).

A modulating region spans residues 1-549 (MEVQLGLGRV…PIDYYFPPQK (549 aa)). Positions 1 to 578 (MEVQLGLGRV…GSCKVFFKRA (578 aa)) are interaction with ZNF318. 2 disordered regions span residues 35-164 (QNPG…LSLL) and 192-225 (QQQQ…YLGG). A compositionally biased stretch (low complexity) spans 44–88 (AASAAPPGASLLLQQQQQQQQQQQQQQQQQQQQQQETSPRQQQQQ). A Phosphoserine; by CDK9 modification is found at S81. Residue S93 is modified to Phosphoserine. Over residues 192-214 (QQQQQEAVSEGSSSGRAREASGA) the composition is skewed to low complexity. The segment covering 215 to 225 (PTSSKDNYLGG) has biased composition (polar residues). Position 222 is a phosphotyrosine; by CSK (Y222). The residue at position 255 (S255) is a Phosphoserine. Y266 carries the phosphotyrosine; by CSK and TNK2 modification. Residues Y306, Y345, Y356, and Y361 each carry the phosphotyrosine; by CSK modification. Position 362 is a phosphotyrosine; by CSK and TNK2 (Y362). K385 participates in a covalent cross-link: Glycyl lysine isopeptide (Lys-Gly) (interchain with G-Cter in SUMO). Y392 is subject to Phosphotyrosine; by CSK. K512 participates in a covalent cross-link: Glycyl lysine isopeptide (Lys-Gly) (interchain with G-Cter in SUMO). Phosphotyrosine; by CSK is present on residues Y526 and Y543. The tract at residues 543–910 (YYFPPQKTCL…GKVKPIYFHT (368 aa)) is interaction with LPXN. NR C4-type zinc fingers lie at residues 551–571 (CLIC…CGSC) and 587–611 (CASR…LRKC). The segment at residues 551–623 (CLICGDEASG…AGMTLGARKL (73 aa)) is a DNA-binding region (nuclear receptor). The tract at residues 563–653 (YGALTCGSCK…TEETTQKLTV (91 aa)) is interaction with HIPK3. The segment at 583–910 (QKYLCASRND…GKVKPIYFHT (328 aa)) is interaction with CCAR1. The segment at 616 to 910 (MTLGARKLKK…GKVKPIYFHT (295 aa)) is interaction with KAT7. Phosphoserine; by STK4/MST1 is present on S642. The NR LBD domain maps to 660–891 (ECQPIFLNVL…DFPEMMAEII (232 aa)). 17beta-hydroxy-5alpha-androstan-3-one is bound by residues N697 and R744. Glycyl lysine isopeptide (Lys-Gly) (interchain with G-Cter in ubiquitin) cross-links involve residues K837 and K839. T869 serves as a coordination point for 17beta-hydroxy-5alpha-androstan-3-one. Position 907 is a phosphotyrosine; by CSK (Y907).

This sequence belongs to the nuclear hormone receptor family. NR3 subfamily. As to quaternary structure, binds DNA as a homodimer. Part of a ternary complex containing AR, EFCAB6/DJBP and PARK7. Interacts with HIPK3 and NR0B2 in the presence of androgen. The ligand binding domain interacts with KAT7/HBO1 in the presence of dihydrotestosterone. Interacts with EFCAB6/DJBP, PQBP1, RANBP9, RBAK, SPDEF, SRA1, TGFB1I1 and RREB1. Interacts with ZMIZ1/ZIMP10 and ZMIZ2/ZMIP7 which both enhance its transactivation activity. Interacts with SLC30A9 and RAD54L2/ARIP4. Interacts with MACROD1 (via macro domain). Interacts via the ligand-binding domain with LXXLL and FXXLF motifs from NCOA1, NCOA2, NCOA3 and MAGEA11. Interacts (via nuclear receptor DNA binding domain and nuclear receptor ligand binding domain) with NCOA4. The AR N-terminal poly-Gln region binds Ran resulting in enhancement of AR-mediated transactivation. Ran-binding decreases as the poly-Gln length increases. Interacts with HIP1 (via coiled coil domain). Interacts (via ligand-binding domain) with TRIM68. Interacts with TNK2. Interacts with USP26. Interacts with RNF6. Interacts (regulated by RNF6 probably through polyubiquitination) with RNF14; regulates AR transcriptional activity. Interacts with PRMT2 and TRIM24. Interacts with RACK1. Interacts with RANBP10; this interaction enhances dihydrotestosterone-induced AR transcriptional activity. Interacts with PRPF6 in a hormone-independent way; this interaction enhances dihydrotestosterone-induced AR transcriptional activity. Interacts with STK4/MST1. Interacts with ZIPK/DAPK3. Interacts with LPXN. Interacts with MAK. Part of a complex containing AR, MAK and NCOA3. Interacts with CRY1. Interacts with CCAR1 and GATA2. Interacts with ZNF318. Interacts with BUD31. Interacts with ARID4A. Interacts with ARID4B. Interacts (via NR LBD domain) with ZBTB7A; the interaction is direct and androgen-dependent. Interacts with NCOR1. Interacts with NCOR2. Interacts with CRY2 in a ligand-dependent manner. Phosphorylated in prostate cancer cells in response to several growth factors including EGF. Phosphorylation is induced by c-Src kinase (CSK). Tyr-526 is one of the major phosphorylation sites and an increase in phosphorylation and Src kinase activity is associated with prostate cancer progression. Phosphorylation by TNK2 enhances the DNA-binding and transcriptional activity. Phosphorylation at Ser-81 by CDK9 regulates AR promoter selectivity and cell growth. Post-translationally, sumoylated on Lys-385 (major) and Lys-512. Ubiquitinated. Deubiquitinated by USP26. 'Lys-6' and 'Lys-27'-linked polyubiquitination by RNF6 modulates AR transcriptional activity and specificity. In terms of processing, palmitoylated by ZDHHC7 and ZDHHC21. Palmitoylation is required for plasma membrane targeting and for rapid intracellular signaling via ERK and AKT kinases and cAMP generation.

It is found in the nucleus. It localises to the cytoplasm. Its function is as follows. Steroid hormone receptors are ligand-activated transcription factors that regulate eukaryotic gene expression and affect cellular proliferation and differentiation in target tissues. Transcription factor activity is modulated by bound coactivator and corepressor proteins like ZBTB7A that recruits NCOR1 and NCOR2 to the androgen response elements/ARE on target genes, negatively regulating androgen receptor signaling and androgen-induced cell proliferation. Transcription activation is also down-regulated by NR0B2. Activated, but not phosphorylated, by HIPK3 and ZIPK/DAPK3. This Pan troglodytes (Chimpanzee) protein is Androgen receptor (AR).